The chain runs to 395 residues: Zinc finger protein 200 (395 aa).

Residues 157 to 208 (VNGSNPEGEDPEREPVENEDYREKSSDDDEMDSSLVSQQPPDNQEKERLNTS) are disordered. The span at 169–181 (REPVENEDYREKS) shows a compositional bias: basic and acidic residues. An interaction with PRMT3 region spans residues 246–395 (RRTRRWYTCP…HSACKTRKQK (150 aa)). 5 consecutive C2H2-type zinc fingers follow at residues 252 to 274 (YTCPLCGKQFNESSYLISHQRTH), 280 to 302 (YDCNHCGKSFNHKTNLNKHERIH), 308 to 330 (YSCSQCGKNFRQNSHRSRHEGIH), 336 to 358 (FKCPECGKTFPKNEEFVLHLQSH), and 364 to 386 (YGCKKCGRRFGRLSNCTRHEKTH).

As to quaternary structure, interacts (via C-terminus) with PRMT3 (via zinc-finger); the interaction is direct and required to localize protein arginine N-methyltransferase PRMT3 to the nucleus and inhibit its proteasomal degradation. As to expression, highly expressed in testis, weakly expressed in spleen, thymus, prostate, ovary, small intestine colon and peripheral blood leukocytes.

The protein resides in the nucleus. Functionally, localizes protein arginine N-methyltransferase PRMT3 to the nucleus. The sequence is that of Zinc finger protein 200 (ZNF200) from Homo sapiens (Human).